Reading from the N-terminus, the 87-residue chain is UPF0250 protein Ent638_1166 (87 aa).

This sequence belongs to the UPF0250 family.

The sequence is that of UPF0250 protein Ent638_1166 from Enterobacter sp. (strain 638).